The primary structure comprises 356 residues: Arginine kinase Scy s 2 (356 aa).

The Phosphagen kinase N-terminal domain maps to Lys9–Lys91. Gly64–Tyr68 contacts L-arginine. A Phosphagen kinase C-terminal domain is found at Phe119 to Met356. ATP is bound by residues Ser122–Arg126 and His185. Glu225 serves as a coordination point for L-arginine. Arg229 contacts ATP. Cys271 is a binding site for L-arginine. ATP contacts are provided by residues Arg280–His284 and Arg309–Glu314. Glu314 serves as a coordination point for L-arginine.

This sequence belongs to the ATP:guanido phosphotransferase family. Muscle (at protein level).

The catalysed reaction is L-arginine + ATP = N(omega)-phospho-L-arginine + ADP + H(+). Functionally, catalyzes the reversible transfer of high energy ATP gamma-phosphate group to L-arginine. The chain is Arginine kinase Scy s 2 from Scylla serrata (Mud crab).